The primary structure comprises 1433 residues: Probable ATP-dependent RNA helicase spindle-E (1433 aa).

Positions 126 to 294 (INAINENPVV…FANERSAPPV (169 aa)) constitute a Helicase ATP-binding domain. Residue 139–146 (GETGCGKT) participates in ATP binding. A DEAH box motif is present at residues 240 to 243 (DEVH). The region spanning 355 to 526 (TGKSYNQSLR…NCVLKAKELK (172 aa)) is the Helicase C-terminal domain. Positions 935 to 998 (AGAITKGLML…RLMSQDLLRH (64 aa)) constitute a Tudor domain.

The protein belongs to the DEAD box helicase family. DEAH subfamily.

It is found in the cytoplasm. It carries out the reaction ATP + H2O = ADP + phosphate + H(+). Its function is as follows. Probable ATP-binding RNA helicase which plays a central role during spermatogenesis and oogenesis by repressing transposable elements and preventing their mobilization, which is essential for the germline integrity. Acts via the piRNA metabolic process, which mediates the repression of transposable elements during meiosis by forming complexes composed of piRNAs and Piwi and govern the methylation and subsequent repression of transposons. Involved in the repression of LTR retrotransposon copia. Also involved in telomere regulation by repressing specialized telomeric retroelements HeT-A, TAHRE, and TART; Drosophila telomeres being maintained by transposition of specialized telomeric retroelements. Involved in telomeric trans-silencing, a repression mechanism by which a transposon or a transgene inserted in subtelomeric heterochromatin has the capacity to repress in trans in the female germline, a homologous transposon, or transgene located in euchromatin. Involved in the repression of testis-expressed Stellate genes by the homologous Su(Ste) repeats. Required for anteroposterior and dorsoventral axis formation during oogenesis. The polypeptide is Probable ATP-dependent RNA helicase spindle-E (spn-E) (Drosophila pseudoobscura pseudoobscura (Fruit fly)).